Consider the following 699-residue polypeptide: Elongation factor G (699 aa).

One can recognise a tr-type G domain in the interval 8-283 (EHIRNIGICA…AVVDFLPSPI (276 aa)). Residues 17–24 (AHIDAGKT), 81–85 (DTPGH), and 135–138 (NKMD) contribute to the GTP site.

It belongs to the TRAFAC class translation factor GTPase superfamily. Classic translation factor GTPase family. EF-G/EF-2 subfamily.

The protein resides in the cytoplasm. Functionally, catalyzes the GTP-dependent ribosomal translocation step during translation elongation. During this step, the ribosome changes from the pre-translocational (PRE) to the post-translocational (POST) state as the newly formed A-site-bound peptidyl-tRNA and P-site-bound deacylated tRNA move to the P and E sites, respectively. Catalyzes the coordinated movement of the two tRNA molecules, the mRNA and conformational changes in the ribosome. The chain is Elongation factor G from Rickettsia conorii (strain ATCC VR-613 / Malish 7).